Here is a 414-residue protein sequence, read N- to C-terminus: MFRMLAKASVTLGSRAAGWVRTMGSYQLLVPPPEALSKPLSVPTRLLLGPGPSNLAPRVLAAGSLRMIGHMQKEMLQIMEEIKQGIQYVFQTRNPLTLVVSGSGHCAMETALFNLLEPGDSFLTGTNGIWGMRAAEIADRIGARVHQMIKKPGEHYTLQEVEEGLAQHKPVLLFLVHGESSTGVVQPLDGFGELCHRYQCLLLVDSVASLGGVPIYMDQQGIDIMYSSSQKVLNAPPGISLISFNDKAKYKVYSRKTKPVSFYTDITYLAKLWGCEGETRVIHHTTPVTSLYCLRESLALIAEQGLENCWRRHREATAHLHKHLQEMGLKFFVKDPEIRLPTITTVTVPAGYNWRDIVSYVLDHFSIEISGGLGPTEERVLRIGLLGYNATTENVDRVAEALREALQHCPKNKL.

The transit peptide at 1–23 (MFRMLAKASVTLGSRAAGWVRTM) directs the protein to the mitochondrion. Lys-231 bears the N6-(pyridoxal phosphate)lysine mark. Lys-247 carries the post-translational modification N6-acetyllysine; alternate. At Lys-247 the chain carries N6-succinyllysine; alternate. An N6-acetyllysine modification is found at Lys-256. Lys-330 carries the post-translational modification N6-acetyllysine; alternate. N6-succinyllysine; alternate is present on Lys-330. Lys-334 bears the N6-acetyllysine mark. Arg-382 lines the substrate pocket. The Microbody targeting signal signature appears at 412–414 (NKL).

It belongs to the class-V pyridoxal-phosphate-dependent aminotransferase family. As to quaternary structure, homodimer. Pyridoxal 5'-phosphate is required as a cofactor.

The protein resides in the peroxisome. Its subcellular location is the mitochondrion matrix. It carries out the reaction L-serine + pyruvate = 3-hydroxypyruvate + L-alanine. It catalyses the reaction glyoxylate + L-alanine = glycine + pyruvate. In terms of biological role, catalyzes the transamination of glyoxylate to glycine and contributes to the glyoxylate detoxification. Catalyzes the transamination between L-serine and pyruvate and weakly contributes to gluconeogenesis from the L-serine metabolism. The sequence is that of Alanine--glyoxylate aminotransferase from Mus musculus (Mouse).